The primary structure comprises 252 residues: 5-oxoprolinase subunit A 1 (252 aa).

It belongs to the LamB/PxpA family. In terms of assembly, forms a complex composed of PxpA, PxpB and PxpC.

It catalyses the reaction 5-oxo-L-proline + ATP + 2 H2O = L-glutamate + ADP + phosphate + H(+). In terms of biological role, catalyzes the cleavage of 5-oxoproline to form L-glutamate coupled to the hydrolysis of ATP to ADP and inorganic phosphate. The protein is 5-oxoprolinase subunit A 1 of Pseudomonas aeruginosa (strain ATCC 15692 / DSM 22644 / CIP 104116 / JCM 14847 / LMG 12228 / 1C / PRS 101 / PAO1).